Consider the following 198-residue polypeptide: Probable GTP-binding protein EngB (198 aa).

An EngB-type G domain is found at Asn-22 to Leu-195. Residues Gly-30–Ser-37, Gly-57–Leu-61, Asp-75–Gly-78, Thr-142–Asp-145, and Phe-174–Ala-176 each bind GTP. 2 residues coordinate Mg(2+): Ser-37 and Thr-59.

This sequence belongs to the TRAFAC class TrmE-Era-EngA-EngB-Septin-like GTPase superfamily. EngB GTPase family. Mg(2+) is required as a cofactor.

Necessary for normal cell division and for the maintenance of normal septation. The protein is Probable GTP-binding protein EngB of Pelotomaculum thermopropionicum (strain DSM 13744 / JCM 10971 / SI).